The following is a 231-amino-acid chain: Ribonuclease 3 (231 aa).

Residues 3-130 form the RNase III domain; that stretch reads MHEFFENFGI…VTAAIYLDQT (128 aa). Glu43 provides a ligand contact to Mg(2+). Residue Asp47 is part of the active site. The Mg(2+) site is built by Asp116 and Glu119. Glu119 is an active-site residue. The DRBM domain occupies 157–228; the sequence is DYKSELQEII…AKDCLNKLKK (72 aa).

The protein belongs to the ribonuclease III family. In terms of assembly, homodimer. Mg(2+) serves as cofactor.

The protein resides in the cytoplasm. It catalyses the reaction Endonucleolytic cleavage to 5'-phosphomonoester.. Functionally, digests double-stranded RNA. Involved in the processing of primary rRNA transcript to yield the immediate precursors to the large and small rRNAs (23S and 16S). Processes some mRNAs, and tRNAs when they are encoded in the rRNA operon. Processes pre-crRNA and tracrRNA of type II CRISPR loci if present in the organism. This Mesoplasma florum (strain ATCC 33453 / NBRC 100688 / NCTC 11704 / L1) (Acholeplasma florum) protein is Ribonuclease 3.